Consider the following 1173-residue polypeptide: Calcium-transporting ATPase 2 (1173 aa).

Residues 1–24 are disordered; that stretch reads MSRQDENSALLANNENNKPSYTGN. Topologically, residues 1–114 are cytoplasmic; it reads MSRQDENSAL…LQLVWAAFND (114 aa). The segment covering 7 to 17 has biased composition (low complexity); the sequence is NSALLANNENN. The chain crosses the membrane as a helical span at residues 115-139; sequence KTMQLLTVAAVVSFVLGLYELWMQP. Residues 140–152 lie on the Vacuolar side of the membrane; that stretch reads PQYDPEGNKIKQV. Residues 153 to 173 form a helical membrane-spanning segment; sequence DWIEGVAIMIAVFVVVLVSAA. Residues 174–349 are Cytoplasmic-facing; the sequence is NDYQKELQFA…LADNISVYGC (176 aa). Residues 350–368 form a helical membrane-spanning segment; it reads VSAIILFLVLFTRYLFYII. Residues 369–388 lie on the Vacuolar side of the membrane; that stretch reads PEDGRFHDLDPAQKGSKFMN. A helical membrane pass occupies residues 389-409; the sequence is IFITSITVIVVAVPEGLPLAV. Ca(2+) contacts are provided by Val398 and Glu403. The Cytoplasmic portion of the chain corresponds to 410-899; sequence TLALAFATTR…RCVSVSIKKF (490 aa). Asp445 functions as the 4-aspartylphosphate intermediate in the catalytic mechanism. Mg(2+)-binding residues include Asp445 and Thr447. ATP-binding positions include Thr447, Lys643, 762–764, Arg816, and Lys822; that span reads TGD. Mg(2+) is bound at residue Asp841. Asn844 contacts ATP. The helical transmembrane segment at 900 to 922 threads the bilayer; it reads IQFQLIVNITAVILTFVSSVASS. Asn907 provides a ligand contact to Ca(2+). Residues 923–929 are Vacuolar-facing; sequence DETSVLT. Residues 930–950 traverse the membrane as a helical segment; that stretch reads AVQLLWINLIMDTLAALALAT. The Ca(2+) site is built by Asn937 and Asp941. Topologically, residues 951–976 are cytoplasmic; it reads DKPDPNIMDRKPRGRSTSLISVSTWK. The chain crosses the membrane as a helical span at residues 977–998; that stretch reads MILSQATLQLIVTFILHFYGPE. Over 999–1010 the chain is Vacuolar; sequence LFFKKHEDEITS. A helical transmembrane segment spans residues 1011–1029; that stretch reads HQQQQLNAMTFNTFVWLQF. Residues 1030–1065 lie on the Cytoplasmic side of the membrane; it reads FTMLVSRKLDEGDGISNWRGRISAANLNFFQDLGRN. A helical transmembrane segment spans residues 1066 to 1086; the sequence is YYFLTIMAIIGSCQVLIMFFG. Residues 1087–1099 lie on the Vacuolar side of the membrane; it reads GAPFSIARQTKSM. The helical transmembrane segment at 1100 to 1120 threads the bilayer; that stretch reads WITAVLCGMLSLIMGVLVRIC. The Cytoplasmic segment spans residues 1121–1173; it reads PDEVAVKVFPAAFVQRFKYVFGLEFLRKNHTGKHDDEEALLEESDSPESTAFY.

Belongs to the cation transport ATPase (P-type) (TC 3.A.3) family.

Its subcellular location is the vacuole membrane. The enzyme catalyses Ca(2+)(in) + ATP + H2O = Ca(2+)(out) + ADP + phosphate + H(+). Functionally, this magnesium-dependent enzyme catalyzes the hydrolysis of ATP coupled with the transport of calcium. Transports the calcium to the vacuole and participates in the control of the cytosolic free calcium. The protein is Calcium-transporting ATPase 2 (PMC1) of Saccharomyces cerevisiae (strain ATCC 204508 / S288c) (Baker's yeast).